The sequence spans 175 residues: tRNA (cytidine(56)-2'-O)-methyltransferase (175 aa).

Residue leucine 82 participates in S-adenosyl-L-methionine binding.

This sequence belongs to the aTrm56 family. Homodimer.

Its subcellular location is the cytoplasm. It carries out the reaction cytidine(56) in tRNA + S-adenosyl-L-methionine = 2'-O-methylcytidine(56) in tRNA + S-adenosyl-L-homocysteine + H(+). Its function is as follows. Specifically catalyzes the AdoMet-dependent 2'-O-ribose methylation of cytidine at position 56 in tRNAs. The protein is tRNA (cytidine(56)-2'-O)-methyltransferase of Cenarchaeum symbiosum (strain A).